Reading from the N-terminus, the 636-residue chain is Chaperone protein HtpG (636 aa).

An a; substrate-binding region spans residues 1-345; the sequence is MSESATANAN…SSDLPLNVSR (345 aa). The segment at 346 to 562 is b; that stretch reads EILQQSKDID…EHDPSGNLAR (217 aa). The segment at 563 to 636 is c; it reads LMKAAGQPMP…NDLMMALSAK (74 aa).

This sequence belongs to the heat shock protein 90 family. In terms of assembly, homodimer.

The protein localises to the cytoplasm. Functionally, molecular chaperone. Has ATPase activity. The polypeptide is Chaperone protein HtpG (Dechloromonas aromatica (strain RCB)).